We begin with the raw amino-acid sequence, 239 residues long: Aspartate/glutamate leucyltransferase (239 aa).

The protein belongs to the R-transferase family. Bpt subfamily.

The protein resides in the cytoplasm. It catalyses the reaction N-terminal L-glutamyl-[protein] + L-leucyl-tRNA(Leu) = N-terminal L-leucyl-L-glutamyl-[protein] + tRNA(Leu) + H(+). The catalysed reaction is N-terminal L-aspartyl-[protein] + L-leucyl-tRNA(Leu) = N-terminal L-leucyl-L-aspartyl-[protein] + tRNA(Leu) + H(+). Its function is as follows. Functions in the N-end rule pathway of protein degradation where it conjugates Leu from its aminoacyl-tRNA to the N-termini of proteins containing an N-terminal aspartate or glutamate. The chain is Aspartate/glutamate leucyltransferase from Campylobacter jejuni subsp. jejuni serotype O:6 (strain 81116 / NCTC 11828).